The primary structure comprises 398 residues: MEIEEASRESGHVVCGSWIRRPKKVNWVLIAKASKRRGSSVSSPALLNIFSFDPITASLSSSPLATHTLKDSDGDPVAVSVHPGGDYFVCSTSKGGCKLFELVGGATGITILAKELLPLQNAGLQKCMAFSFDGSKLAVGGVDGCLRIMEWPNLSVILDEPKAHKSIRDMDFSLDSEFLATTSTDGSARIWKAEDGFPLSTLERSGDENIELCRFSKDGTKPFLFCAAQRGDTPMVNVYDISTWKKLGFKKLSRKTASTMAVSLDGKYIALGGKDGDVSVAEVKTMEIYHYSKRLHLGQSIASLEFCPSERVMLTTSSEWGEMVTKLTVPKEWKEWQIYALLFCLFMASVIAAYVFFENSDSFWKLPMGKDQKRPKISLFGGSSSTPSEDHSRWNLDL.

Met1 carries the N-acetylmethionine modification. The Cytoplasmic portion of the chain corresponds to 1–337; sequence MEIEEASRES…TVPKEWKEWQ (337 aa). WD repeat units follow at residues 71–110, 120–159, 162–201, 252–291, and 296–334; these read DSDG…TGIT, QNAG…VILD, KAHK…PLST, LSRK…IYHY, and HLGQ…KEWK. Residues 338 to 358 form a helical membrane-spanning segment; the sequence is IYALLFCLFMASVIAAYVFFE. The Lumenal segment spans residues 359-398; that stretch reads NSDSFWKLPMGKDQKRPKISLFGGSSSTPSEDHSRWNLDL.

In terms of tissue distribution, ubiquitous with higher levels in flowers, roots and senescing leaves.

It is found in the endoplasmic reticulum membrane. Its function is as follows. Involved in Pi uptake by facilitating the trafficking of PHT1-1/PHT1;1 from the endoplasmic reticulum to the plasma membrane. The sequence is that of SEC12-like protein 1 (PHF1) from Arabidopsis thaliana (Mouse-ear cress).